The chain runs to 245 residues: 3-deoxy-manno-octulosonate cytidylyltransferase (245 aa).

This sequence belongs to the KdsB family.

Its subcellular location is the cytoplasm. It carries out the reaction 3-deoxy-alpha-D-manno-oct-2-ulosonate + CTP = CMP-3-deoxy-beta-D-manno-octulosonate + diphosphate. It participates in nucleotide-sugar biosynthesis; CMP-3-deoxy-D-manno-octulosonate biosynthesis; CMP-3-deoxy-D-manno-octulosonate from 3-deoxy-D-manno-octulosonate and CTP: step 1/1. The protein operates within bacterial outer membrane biogenesis; lipopolysaccharide biosynthesis. In terms of biological role, activates KDO (a required 8-carbon sugar) for incorporation into bacterial lipopolysaccharide in Gram-negative bacteria. The chain is 3-deoxy-manno-octulosonate cytidylyltransferase from Elusimicrobium minutum (strain Pei191).